The sequence spans 263 residues: GTP cyclohydrolase 1 type 2 homolog (263 aa).

H76, H77, D113, H231, and E235 together coordinate a divalent metal cation.

It belongs to the GTP cyclohydrolase I type 2/NIF3 family. Homohexamer.

The sequence is that of GTP cyclohydrolase 1 type 2 homolog from Deinococcus radiodurans (strain ATCC 13939 / DSM 20539 / JCM 16871 / CCUG 27074 / LMG 4051 / NBRC 15346 / NCIMB 9279 / VKM B-1422 / R1).